A 915-amino-acid polypeptide reads, in one-letter code: Hexokinase HKDC1 (915 aa).

Positions 1-20 are mitochondrial-binding peptide (MBP); it reads MFAVHLVAFYFTKLKEDQIK. Hexokinase domains lie at 16-458 and 464-903; these read EDQI…MVTA and QAQR…LITA. ATP is bound by residues Arg30 and 84 to 89; that span reads DLGGSK. Positions 73 to 207 are hexokinase small subdomain 1; sequence DGSENGEFLS…DLDVDILALV (135 aa). 84–91 is a D-glucose 6-phosphate binding site; the sequence is DLGGSKFR. Residues Ser155, 172–173, and 208–209 each bind D-glucose; these read TK and ND. A hexokinase large subdomain 1 region spans residues 208 to 447; sequence NDTVGTMMTC…CDVRFLLSES (240 aa). Asp209 and Thr232 together coordinate D-glucose 6-phosphate. D-glucose contacts are provided by residues Asn235, Glu260, and 291–294; that span reads QLFE. 413–415 lines the D-glucose 6-phosphate pocket; the sequence is DGT. 425–426 serves as a coordination point for ATP; that stretch reads KR. D-glucose 6-phosphate is bound by residues Ser449 and 532–536; that span reads DLGGT. The tract at residues 521 to 652 is hexokinase small subdomain 2; the sequence is DGTEKGKFLA…EFDLDIVAIV (132 aa). 532–537 lines the ATP pocket; it reads DLGGTN. Residues 600-601, 617-618, and 653-654 each bind D-glucose; these read SF, TK, and ND. A hexokinase large subdomain 2 region spans residues 653–892; sequence NDTVGTMMTC…CDVTFMLSED (240 aa). D-glucose 6-phosphate-binding residues include Asp654 and Thr677. Thr677 contacts ATP. Residues 679–680, Glu705, and Glu739 each bind D-glucose; that span reads SN. ATP-binding positions include 744 to 745, 781 to 785, and 860 to 864; these read GM, TKFLS, and TLYKL. Residues 858 to 860 and Ser894 contribute to the D-glucose 6-phosphate site; that span reads DGT.

The protein belongs to the hexokinase family. Widely expressed. Detected in retina, brain, cerebellum, liver, lung, kidney, spleen, pancreas and intestine.

The protein localises to the cytoplasm. Its subcellular location is the mitochondrion membrane. It localises to the photoreceptor inner segment. The enzyme catalyses a D-hexose + ATP = a D-hexose 6-phosphate + ADP + H(+). It catalyses the reaction D-glucose + ATP = D-glucose 6-phosphate + ADP + H(+). It functions in the pathway carbohydrate metabolism; hexose metabolism. The protein operates within carbohydrate degradation; glycolysis; D-glyceraldehyde 3-phosphate and glycerone phosphate from D-glucose: step 1/4. In terms of biological role, catalyzes the phosphorylation of hexose to hexose 6-phosphate, although at very low level compared to other hexokinases. Has low glucose phosphorylating activity compared to other hexokinases. Involved in glucose homeostasis and hepatic lipid accumulation. Required to maintain whole-body glucose homeostasis during pregnancy; however additional evidences are required to confirm this role. This Mus musculus (Mouse) protein is Hexokinase HKDC1.